The primary structure comprises 243 residues: Small ribosomal subunit protein uS2 (243 aa).

Belongs to the universal ribosomal protein uS2 family.

This chain is Small ribosomal subunit protein uS2, found in Aliivibrio salmonicida (strain LFI1238) (Vibrio salmonicida (strain LFI1238)).